The following is a 282-amino-acid chain: tRNA pseudouridine synthase B (282 aa).

D39 serves as the catalytic Nucleophile.

The protein belongs to the pseudouridine synthase TruB family. Type 1 subfamily.

It catalyses the reaction uridine(55) in tRNA = pseudouridine(55) in tRNA. Functionally, responsible for synthesis of pseudouridine from uracil-55 in the psi GC loop of transfer RNAs. This chain is tRNA pseudouridine synthase B, found in Borreliella afzelii (strain PKo) (Borrelia afzelii).